A 284-amino-acid polypeptide reads, in one-letter code: Bifunctional protein FolD (284 aa).

Residues 166 to 168, Ser-191, and Ile-232 contribute to the NADP(+) site; that span reads GAS.

The protein belongs to the tetrahydrofolate dehydrogenase/cyclohydrolase family. Homodimer.

It catalyses the reaction (6R)-5,10-methylene-5,6,7,8-tetrahydrofolate + NADP(+) = (6R)-5,10-methenyltetrahydrofolate + NADPH. The enzyme catalyses (6R)-5,10-methenyltetrahydrofolate + H2O = (6R)-10-formyltetrahydrofolate + H(+). Its pathway is one-carbon metabolism; tetrahydrofolate interconversion. Its function is as follows. Catalyzes the oxidation of 5,10-methylenetetrahydrofolate to 5,10-methenyltetrahydrofolate and then the hydrolysis of 5,10-methenyltetrahydrofolate to 10-formyltetrahydrofolate. This Neisseria meningitidis serogroup C (strain 053442) protein is Bifunctional protein FolD.